The chain runs to 361 residues: DNA polymerase IV 3 (361 aa).

The UmuC domain occupies 12-192 (IIHVDMDAFY…LPVNKFHGVG (181 aa)). The Mg(2+) site is built by Asp-16 and Asp-110. Residue Glu-111 is part of the active site.

The protein belongs to the DNA polymerase type-Y family. Monomer. Mg(2+) serves as cofactor.

It localises to the cytoplasm. It catalyses the reaction DNA(n) + a 2'-deoxyribonucleoside 5'-triphosphate = DNA(n+1) + diphosphate. Poorly processive, error-prone DNA polymerase involved in untargeted mutagenesis. Copies undamaged DNA at stalled replication forks, which arise in vivo from mismatched or misaligned primer ends. These misaligned primers can be extended by PolIV. Exhibits no 3'-5' exonuclease (proofreading) activity. May be involved in translesional synthesis, in conjunction with the beta clamp from PolIII. The protein is DNA polymerase IV 3 (dinB3) of Mesorhizobium japonicum (strain LMG 29417 / CECT 9101 / MAFF 303099) (Mesorhizobium loti (strain MAFF 303099)).